We begin with the raw amino-acid sequence, 308 residues long: Ribosomal RNA large subunit methyltransferase F (308 aa).

Belongs to the methyltransferase superfamily. METTL16/RlmF family.

It localises to the cytoplasm. It catalyses the reaction adenosine(1618) in 23S rRNA + S-adenosyl-L-methionine = N(6)-methyladenosine(1618) in 23S rRNA + S-adenosyl-L-homocysteine + H(+). Functionally, specifically methylates the adenine in position 1618 of 23S rRNA. In Salmonella schwarzengrund (strain CVM19633), this protein is Ribosomal RNA large subunit methyltransferase F.